The following is a 137-amino-acid chain: Nucleoside diphosphate kinase (137 aa).

Residues Lys9, Phe57, Arg85, Thr91, Arg102, and Asn112 each coordinate ATP. The active-site Pros-phosphohistidine intermediate is His115.

It belongs to the NDK family. As to quaternary structure, homotetramer. Mg(2+) serves as cofactor.

The protein localises to the cytoplasm. The enzyme catalyses a 2'-deoxyribonucleoside 5'-diphosphate + ATP = a 2'-deoxyribonucleoside 5'-triphosphate + ADP. The catalysed reaction is a ribonucleoside 5'-diphosphate + ATP = a ribonucleoside 5'-triphosphate + ADP. In terms of biological role, major role in the synthesis of nucleoside triphosphates other than ATP. The ATP gamma phosphate is transferred to the NDP beta phosphate via a ping-pong mechanism, using a phosphorylated active-site intermediate. The chain is Nucleoside diphosphate kinase from Sulfurimonas denitrificans (strain ATCC 33889 / DSM 1251) (Thiomicrospira denitrificans (strain ATCC 33889 / DSM 1251)).